A 203-amino-acid chain; its full sequence is Imidazoleglycerol-phosphate dehydratase (203 aa).

Belongs to the imidazoleglycerol-phosphate dehydratase family.

It is found in the cytoplasm. The catalysed reaction is D-erythro-1-(imidazol-4-yl)glycerol 3-phosphate = 3-(imidazol-4-yl)-2-oxopropyl phosphate + H2O. It functions in the pathway amino-acid biosynthesis; L-histidine biosynthesis; L-histidine from 5-phospho-alpha-D-ribose 1-diphosphate: step 6/9. The protein is Imidazoleglycerol-phosphate dehydratase of Synechococcus sp. (strain RCC307).